The following is a 102-amino-acid chain: Large ribosomal subunit protein uL24 (102 aa).

This sequence belongs to the universal ribosomal protein uL24 family. As to quaternary structure, part of the 50S ribosomal subunit.

In terms of biological role, one of two assembly initiator proteins, it binds directly to the 5'-end of the 23S rRNA, where it nucleates assembly of the 50S subunit. Functionally, one of the proteins that surrounds the polypeptide exit tunnel on the outside of the subunit. The chain is Large ribosomal subunit protein uL24 from Polynucleobacter asymbioticus (strain DSM 18221 / CIP 109841 / QLW-P1DMWA-1) (Polynucleobacter necessarius subsp. asymbioticus).